A 229-amino-acid polypeptide reads, in one-letter code: Ras-related protein rab-39 (229 aa).

73 to 77 (DTAGQ) contributes to the GTP binding site. Residues C227 and C229 are each lipidated (S-geranylgeranyl cysteine). Cysteine methyl ester is present on C229.

The protein belongs to the small GTPase superfamily. Rab family. In terms of assembly, interacts (in GTP-bound form) with Ras association domain-containing protein rsf-1.

The protein resides in the cell membrane. It localises to the cytoplasmic vesicle membrane. It is found in the golgi apparatus. Small GTPases Rab involved in autophagy. The small GTPases Rab are key regulators of intracellular membrane trafficking, from the formation of transport vesicles to their fusion with membranes. Rabs cycle between an inactive GDP-bound form and an active GTP-bound form that is able to recruit to membranes different sets of downstream effectors directly responsible for vesicle formation, movement, tethering and fusion. Involved in positively regulating the oxidative stress response, perhaps in concert with the Ras association domain-containing protein rsf-1. The polypeptide is Ras-related protein rab-39 (Caenorhabditis elegans).